Reading from the N-terminus, the 335-residue chain is 3-hydroxy-3-methylglutaryl-CoA lyase, cytoplasmic (335 aa).

A lipid anchor (N-myristoyl glycine) is attached at G2. Residues 43-310 (VKIVEVGPRD…ETGVDLLKVM (268 aa)) form the Pyruvate carboxyltransferase domain. R51 lines the substrate pocket. Residue D52 coordinates a divalent metal cation. K58 is modified (N6-acetyllysine). Residues H243 and H245 each contribute to the a divalent metal cation site. C276 is an active-site residue. Position 285 (N285) interacts with a divalent metal cation.

Belongs to the HMG-CoA lyase family. It depends on a divalent metal cation as a cofactor.

The protein localises to the cytoplasm. The protein resides in the cytosol. Its subcellular location is the endoplasmic reticulum membrane. It carries out the reaction (3S)-3-hydroxy-3-methylglutaryl-CoA = acetoacetate + acetyl-CoA. It participates in metabolic intermediate metabolism; (S)-3-hydroxy-3-methylglutaryl-CoA degradation; acetoacetate from (S)-3-hydroxy-3-methylglutaryl-CoA: step 1/1. Non-mitochondrial 3-hydroxy-3-methylglutaryl-CoA lyase that catalyzes a cation-dependent cleavage of (S)-3-hydroxy-3-methylglutaryl-CoA into acetyl-CoA and acetoacetate, a key step in ketogenesis, the products of which support energy production in nonhepatic animal tissues. This is 3-hydroxy-3-methylglutaryl-CoA lyase, cytoplasmic (hmgcll1) from Danio rerio (Zebrafish).